The chain runs to 472 residues: Membrane-bound acylglycerophosphatidylinositol O-acyltransferase MBOAT7 (472 aa).

The Cytoplasmic segment spans residues 1 to 5 (MSPEE). A helical membrane pass occupies residues 6–22 (WTYLVVLLISIPIGFLF). Over 23–33 (KKAGPGLKRWG) the chain is Lumenal. The helical transmembrane segment at 34-57 (AAAVGLGLTLFTCGPHTLHSLVTI) threads the bilayer. Topologically, residues 58-73 (LGTWALIQAQPCSCHA) are cytoplasmic. The chain crosses the membrane as a helical span at residues 74 to 93 (LALAWTFSYLLFFRALSLLG). The Lumenal segment spans residues 94–194 (LPTPTPFTNA…VPSLRPLLRR (101 aa)). The chain crosses the membrane as a helical span at residues 195–212 (AWPAPLFGLLFLLSSHLF). The Cytoplasmic segment spans residues 213 to 231 (PLEAVREDAFYARPLPARL). Residues 232-261 (FYMIPVFFAFRMRFYVAWIAAECGCIAAGF) traverse the membrane as a helical segment. Over 262–426 (GAYPVAAKAR…LSLADTLRYW (165 aa)) the chain is Lumenal. An N-linked (GlcNAc...) asparagine glycan is attached at Asn321. A helical transmembrane segment spans residues 427–447 (ASIYFCIHFLALAALGLGLAL). At 448–472 (GGGSPSRRKAASQPTSLAPEKLREE) the chain is on the cytoplasmic side. Residues 453 to 472 (SRRKAASQPTSLAPEKLREE) form a disordered region.

It belongs to the membrane-bound acyltransferase family. Interacts with SPTSSA; the interaction facilitates MBOAT7 location to mitochondria-associated membranes (MAMs). In terms of tissue distribution, overexpressed in metastatic breast and bladder carcinomas relative to normal breast epithelium and urothelium.

The protein resides in the endoplasmic reticulum membrane. The enzyme catalyses a 1-acyl-sn-glycero-3-phospho-(1D-myo-inositol) + (5Z,8Z,11Z,14Z)-eicosatetraenoyl-CoA = a 1-acyl-2-(5Z,8Z,11Z,14Z-eicosatetraenoyl)-sn-glycero-3-phospho-(1D-myo-inositol) + CoA. The catalysed reaction is (5Z,8Z,11Z,14Z)-eicosatetraenoyl-CoA + 1-hexadecanoyl-sn-glycero-3-phosphocholine = 1-hexadecanoyl-2-(5Z,8Z,11Z,14Z-eicosatetraenoyl)-sn-glycero-3-phosphocholine + CoA. It carries out the reaction a 1-acyl-sn-glycero-3-phospho-(1D-myo-inositol) + an acyl-CoA = a 1,2-diacyl-sn-glycero-3-phospho-(1D-myo-inositol) + CoA. It catalyses the reaction 1-octadecanoyl-sn-glycero-3-phospho-(1D-myo-inositol) + (5Z,8Z,11Z,14Z)-eicosatetraenoyl-CoA = 1-octadecanoyl-2-(5Z,8Z,11Z,14Z-eicosatetraenoyl)-sn-glycero-3-phospho-(1D-myo-inositol) + CoA. It participates in lipid metabolism; phospholipid metabolism. Its activity is regulated as follows. Activity is inhibited by thimerosal. Functionally, acyltransferase which catalyzes the transfer of an acyl group from an acyl-CoA to a lysophosphatidylinositol (1-acylglycerophosphatidylinositol or LPI) leading to the production of a phosphatidylinositol (1,2-diacyl-sn-glycero-3-phosphoinositol or PI) and participates in the reacylation step of the phospholipid remodeling pathway also known as the Lands cycle. Prefers arachidonoyl-CoA as the acyl donor, thus contributing to the regulation of free levels arachidonic acid in cell. In liver, participates in the regulation of triglyceride metabolism through the phosphatidylinositol acyl-chain remodeling regulation. The protein is Membrane-bound acylglycerophosphatidylinositol O-acyltransferase MBOAT7 of Homo sapiens (Human).